A 946-amino-acid polypeptide reads, in one-letter code: Calcium-transporting ATPase type 2C member 2 (946 aa).

Over 1–106 (MVEGRVSEFL…DNSEPVWKKY (106 aa)) the chain is Cytoplasmic. Positions 71 to 95 (VDLHTGLSEFSVTQRRLAHGWNEFV) are interaction with ORAI1. A helical membrane pass occupies residues 107–127 (LDQFKNPLILLLLGSALVSVL). At 128–129 (TK) the chain is on the extracellular side. Residues 130 to 150 (EYEDAVSIATAVLVVVTVAFI) form a helical membrane-spanning segment. The Cytoplasmic segment spans residues 151-231 (QEYRSEKSLE…EAEPCSKTDS (81 aa)). A helical membrane pass occupies residues 232–252 (PLTGGGDLTTLSNIVFMGTLV). Residues 253–293 (QYGRGQGVVIGTGESSQFGEVFKMMQAEETPKTPLQKSMDR) lie on the Extracellular side of the membrane. T264 carries the post-translational modification Phosphothreonine. Residues S267 and S268 each carry the phosphoserine modification. A helical transmembrane segment spans residues 294–314 (LGKQLTLFSFGIIGLIMLIGW). Residues 315 to 331 (SQGKQLLSMFTIGVSLA) lie on the Cytoplasmic side of the membrane. Residues V332, A333, I335, and E337 each coordinate Ca(2+). Residues 332–352 (VAAIPEGLPIVVMVTLVLGVL) form a helical membrane-spanning segment. Residues 353 to 750 (RMAKKRVIVK…ISALSLITLS (398 aa)) are Extracellular-facing. D379 serves as the catalytic 4-aspartylphosphate intermediate. Mg(2+)-binding residues include D674 and D678. Residues 751–771 (TVFNLPSPLNAMQILWINIIM) traverse the membrane as a helical segment. Positions 768 and 772 each coordinate Ca(2+). Over 772–804 (DGPPAQSLGVEPVDKDAFRQPPRSVRDTILSRA) the chain is Cytoplasmic. Residues 805–825 (LILKILMSAAIIISGTLFIFW) traverse the membrane as a helical segment. Residues 826–837 (KEMPEDRASTPR) are Extracellular-facing. Residues 838–855 (TTTMTFTCFVFFDLFNAL) form a helical membrane-spanning segment. The Cytoplasmic portion of the chain corresponds to 856-874 (TCRSQTKLIFEIGFLRNHM). Residues 875 to 895 (FLYSVLGSILGQLAVIYIPPL) form a helical membrane-spanning segment. The Extracellular segment spans residues 896 to 905 (QRVFQTENLG). A helical transmembrane segment spans residues 906–926 (ALDLLFLTGLASSVFILSELL). At 927-946 (KLCEKYCCSPKRVQMHPEDV) the chain is on the cytoplasmic side.

The protein belongs to the cation transport ATPase (P-type) (TC 3.A.3) family. Type IIA subfamily. As to quaternary structure, interacts (via N-terminus) with ORAI1 (via N- and C-termini); this interaction regulates Ca(2+) influx at the plasma membrane. In terms of tissue distribution, highly expressed in the gastrointestinal and respiratory tracts, prostate, thyroid, salivary, and mammary glands. Expressed in colon epithelial cells (at protein level). Expressed in brain and testis (at protein level).

Its subcellular location is the golgi apparatus. The protein resides in the trans-Golgi network membrane. The protein localises to the cell membrane. It localises to the basolateral cell membrane. The catalysed reaction is Ca(2+)(in) + ATP + H2O = Ca(2+)(out) + ADP + phosphate + H(+). It carries out the reaction Mn(2+)(in) + ATP + H2O = Mn(2+)(out) + ADP + phosphate + H(+). In terms of biological role, ATP-driven pump that supplies the Golgi apparatus with Ca(2+) and Mn(2+) ions, both essential cofactors for processing and trafficking of newly synthesized proteins in the secretory pathway. Within a catalytic cycle, acquires Ca(2+) or Mn(2+) ions on the cytoplasmic side of the membrane and delivers them to the lumenal side. The transfer of ions across the membrane is coupled to ATP hydrolysis and is associated with a transient phosphorylation that shifts the pump conformation from inward-facing to outward-facing state. Induces Ca(2+) influx independently of its ATP-driven pump function. At the basolateral membrane of mammary epithelial cells, interacts with Ca(2+) channel ORAI1 and mediates Ca(2+) entry independently of the Ca(2+) content of endoplasmic reticulum or Golgi stores. May facilitate transepithelial transport of large quantities of Ca(2+) for milk secretion via activation of Ca(2+) influx channels at the plasma membrane and active Ca(2+) transport at the Golgi apparatus. In Homo sapiens (Human), this protein is Calcium-transporting ATPase type 2C member 2.